A 291-amino-acid polypeptide reads, in one-letter code: MDIISLKAYAKINLALDVIGKRPNGYHDVRMIMQTIKLYDKITIKPTTNPDITIKTNLHFLPTNENNIVYTACKLFKDTFQISDGFYINLEKRIPVAAGMAGGSSDAAATLFGLNELFQTNQSLEDLMKLGVKLGADVPYCLLRGTALSEGIGEVLTPLPPAPNCYCLIVKPPVSVSTKFVYENLKLDENTKHPNIDGMVEAIEKQDLHQMSSLVSNVLESVTIKHHPEIERIKMDLLSHGALNALMSGSGPTVFALFDNQKAAERAFYEYKVGPYGKQTFLTRFFESKNV.

Residue K11 is part of the active site. 95–105 contacts ATP; it reads PVAAGMAGGSS. Residue D137 is part of the active site.

Belongs to the GHMP kinase family. IspE subfamily.

It carries out the reaction 4-CDP-2-C-methyl-D-erythritol + ATP = 4-CDP-2-C-methyl-D-erythritol 2-phosphate + ADP + H(+). It participates in isoprenoid biosynthesis; isopentenyl diphosphate biosynthesis via DXP pathway; isopentenyl diphosphate from 1-deoxy-D-xylulose 5-phosphate: step 3/6. Functionally, catalyzes the phosphorylation of the position 2 hydroxy group of 4-diphosphocytidyl-2C-methyl-D-erythritol. The polypeptide is 4-diphosphocytidyl-2-C-methyl-D-erythritol kinase (Lachnoclostridium phytofermentans (strain ATCC 700394 / DSM 18823 / ISDg) (Clostridium phytofermentans)).